The sequence spans 550 residues: CTP synthase (550 aa).

Residues 1–270 (MTKFVFVTGG…DRLICEELRL (270 aa)) are amidoligase domain. S13 contacts CTP. S13 is a UTP binding site. ATP contacts are provided by residues 14-19 (SLGKGI) and D71. Residues D71 and E144 each coordinate Mg(2+). CTP contacts are provided by residues 151–153 (DIE), 191–196 (KTKPTQ), and K227. Residues 191–196 (KTKPTQ) and K227 each bind UTP. The Glutamine amidotransferase type-1 domain occupies 295 to 547 (TIGMVGKYVD…VEAALASQQR (253 aa)). G356 contacts L-glutamine. C383 acts as the Nucleophile; for glutamine hydrolysis in catalysis. L-glutamine-binding positions include 384–387 (LGMQ), E407, and R473. Residues H520 and E522 contribute to the active site.

The protein belongs to the CTP synthase family. In terms of assembly, homotetramer.

It catalyses the reaction UTP + L-glutamine + ATP + H2O = CTP + L-glutamate + ADP + phosphate + 2 H(+). The enzyme catalyses L-glutamine + H2O = L-glutamate + NH4(+). The catalysed reaction is UTP + NH4(+) + ATP = CTP + ADP + phosphate + 2 H(+). It functions in the pathway pyrimidine metabolism; CTP biosynthesis via de novo pathway; CTP from UDP: step 2/2. Allosterically activated by GTP, when glutamine is the substrate; GTP has no effect on the reaction when ammonia is the substrate. The allosteric effector GTP functions by stabilizing the protein conformation that binds the tetrahedral intermediate(s) formed during glutamine hydrolysis. Inhibited by the product CTP, via allosteric rather than competitive inhibition. Functionally, catalyzes the ATP-dependent amination of UTP to CTP with either L-glutamine or ammonia as the source of nitrogen. Regulates intracellular CTP levels through interactions with the four ribonucleotide triphosphates. The polypeptide is CTP synthase (Cupriavidus necator (strain ATCC 17699 / DSM 428 / KCTC 22496 / NCIMB 10442 / H16 / Stanier 337) (Ralstonia eutropha)).